We begin with the raw amino-acid sequence, 484 residues long: Protein nucleotidyltransferase YdiU (484 aa).

ATP is bound by residues Gly81, Gly83, Arg84, Lys103, Asp115, Gly116, Arg166, and Arg173. The active-site Proton acceptor is the Asp244. Mg(2+) is bound by residues Asn245 and Asp254. Position 254 (Asp254) interacts with ATP.

It belongs to the SELO family. Mg(2+) is required as a cofactor. It depends on Mn(2+) as a cofactor.

It catalyses the reaction L-seryl-[protein] + ATP = 3-O-(5'-adenylyl)-L-seryl-[protein] + diphosphate. It carries out the reaction L-threonyl-[protein] + ATP = 3-O-(5'-adenylyl)-L-threonyl-[protein] + diphosphate. The enzyme catalyses L-tyrosyl-[protein] + ATP = O-(5'-adenylyl)-L-tyrosyl-[protein] + diphosphate. The catalysed reaction is L-histidyl-[protein] + UTP = N(tele)-(5'-uridylyl)-L-histidyl-[protein] + diphosphate. It catalyses the reaction L-seryl-[protein] + UTP = O-(5'-uridylyl)-L-seryl-[protein] + diphosphate. It carries out the reaction L-tyrosyl-[protein] + UTP = O-(5'-uridylyl)-L-tyrosyl-[protein] + diphosphate. Functionally, nucleotidyltransferase involved in the post-translational modification of proteins. It can catalyze the addition of adenosine monophosphate (AMP) or uridine monophosphate (UMP) to a protein, resulting in modifications known as AMPylation and UMPylation. This chain is Protein nucleotidyltransferase YdiU, found in Shewanella baltica (strain OS195).